Reading from the N-terminus, the 425-residue chain is UDP-sugar transporter protein SLC35A5 (425 aa).

Residues 1–7 (MESNCGH) are Cytoplasmic-facing. Residues 8 to 28 (PMLSVSSAMYTFLLGAIFITL) form a helical membrane-spanning segment. The Lumenal segment spans residues 29–52 (SSSRILLVKYSANEENKYDYLPTT). A helical transmembrane segment spans residues 53 to 73 (VNVCSELVKLVFCALVSFWVL). At 74–92 (KKEDHQNRKLRCGSWKEFF) the chain is on the cytoplasmic side. A helical transmembrane segment spans residues 93-115 (NFMKWSIPAFLYFLDNLIVFYVL). Over 116-119 (SYLQ) the chain is Lumenal. A helical membrane pass occupies residues 120 to 142 (PAMAVIFSNFSIITTALLFRIVL). Topologically, residues 143–147 (KRHLN) are cytoplasmic. Residues 148–168 (GIQWASLLILFLSIVALTSGT) form a helical membrane-spanning segment. Topologically, residues 169-228 (ETSQHSLAGHGFHHDALFSPSNSCLLFRSECPRKDNCTAKEWTFSEAQWNTTARVFSHIR) are lumenal. N-linked (GlcNAc...) asparagine glycans are attached at residues Asn-204 and Asn-218. A helical membrane pass occupies residues 229 to 249 (LGLGHVLIIVQCFISSMANIY). The Cytoplasmic segment spans residues 250-263 (NEKILKEGNQLTES). A helical transmembrane segment spans residues 264-284 (IFVQNSKLYFFGVLFNGLTLG). Residues 285-303 (LQSGNRDQIKNCGIFYGHN) are Lumenal-facing. The helical transmembrane segment at 304-324 (AFSVALIFVTAFQGLSVAFIL) threads the bilayer. The Cytoplasmic portion of the chain corresponds to 325 to 330 (KFLDNM). Residues 331–351 (FHVLMAQVTTVVITTVSVLVF) traverse the membrane as a helical segment. The Lumenal segment spans residues 352–354 (DFR). The chain crosses the membrane as a helical span at residues 355–375 (PSLEFFLEAPSVLLSILIYNA). The Cytoplasmic portion of the chain corresponds to 376-425 (SNPQGVENVPRKERIRDLSGTLWERSSGDGEELERLTKPKSDIESDEDTF). Ser-394, Ser-416, and Ser-420 each carry phosphoserine. Positions 398-425 (WERSSGDGEELERLTKPKSDIESDEDTF) are disordered. Residues 408-418 (LERLTKPKSDI) are compositionally biased toward basic and acidic residues.

This sequence belongs to the nucleotide-sugar transporter family. SLC35A subfamily. As to quaternary structure, probably forms homooligomers and heterooligomers with SLC35A1, SLC35A2, SLC35A3 and SLC35A4.

The protein resides in the golgi apparatus membrane. The catalysed reaction is UMP(out) + UDP-alpha-D-glucuronate(in) = UMP(in) + UDP-alpha-D-glucuronate(out). The enzyme catalyses UMP(out) + UDP-N-acetyl-alpha-D-glucosamine(in) = UMP(in) + UDP-N-acetyl-alpha-D-glucosamine(out). It carries out the reaction UDP-N-acetyl-alpha-D-galactosamine(in) + UMP(out) = UDP-N-acetyl-alpha-D-galactosamine(out) + UMP(in). Functionally, probable UDP-sugar:UMP transmembrane antiporter involved in UDP-alpha-D-glucuronate/UDP-GlcA, UDP-GlcNAc/UDP-N-acetyl-alpha-D-glucosamine and UDP-N-acetyl-alpha-D-galactosamine/UDP-GalNAc transport from the cytosol to the lumen of the Golgi. This is UDP-sugar transporter protein SLC35A5 from Bos taurus (Bovine).